The following is a 762-amino-acid chain: 5-methyltetrahydropteroyltriglutamate--homocysteine methyltransferase (762 aa).

5-methyltetrahydropteroyltri-L-glutamate is bound by residues 17–20 and lysine 111; that span reads REWK. Residues 435 to 437 and glutamate 488 contribute to the L-homocysteine site; that span reads IGS. L-methionine-binding positions include 435–437 and glutamate 488; that span reads IGS. Residues 519–520 and tryptophan 565 contribute to the 5-methyltetrahydropteroyltri-L-glutamate site; that span reads RC. Aspartate 603 is a binding site for L-homocysteine. Aspartate 603 provides a ligand contact to L-methionine. Glutamate 609 contributes to the 5-methyltetrahydropteroyltri-L-glutamate binding site. Zn(2+) is bound by residues histidine 645, cysteine 647, and glutamate 669. Histidine 698 (proton donor) is an active-site residue. A Zn(2+)-binding site is contributed by cysteine 730.

It belongs to the vitamin-B12 independent methionine synthase family. Zn(2+) serves as cofactor.

The catalysed reaction is 5-methyltetrahydropteroyltri-L-glutamate + L-homocysteine = tetrahydropteroyltri-L-glutamate + L-methionine. It participates in amino-acid biosynthesis; L-methionine biosynthesis via de novo pathway; L-methionine from L-homocysteine (MetE route): step 1/1. Functionally, catalyzes the transfer of a methyl group from 5-methyltetrahydrofolate to homocysteine resulting in methionine formation. In Bacillus cereus (strain ATCC 10987 / NRS 248), this protein is 5-methyltetrahydropteroyltriglutamate--homocysteine methyltransferase.